Here is a 203-residue protein sequence, read N- to C-terminus: UPF0637 protein SH1846 (203 aa).

Belongs to the UPF0637 family.

In Staphylococcus haemolyticus (strain JCSC1435), this protein is UPF0637 protein SH1846.